The following is a 530-amino-acid chain: MSATLGRAFVQNFLGQAPAWYKYTIVAFLLINPLVALTLGPVTAGWLLLAEFIFTLAMALKCYPLQPGGLLAIEAVMIGLTSAETVLHKVVGNIEVMLLLIFMVAGIYFLKDLLLFMFTRILLGVKSKVTLSLLFCAAAALLSAFLDALTVTAVVIAVCTGFYGIYHKVASGKTFQQKHDHGDDTTVEELHREDLRRFRSFLRSLLMHAAVGTALGGVCTLVGEPQNLLIANKAGWEFGEFFLRMAPITLPVLVMGFFTCAFLEFSGSFGYGEDIPEKVRGIMRQYALEQDRKRTPQNRAALVIQAITAVWLVIGLATHAASVGLVGLTVIILATSFTGIIEEHRLGAAFEEALPFTALLTVFFAVVAVIADQQLFAPVIEYVLSLEKQVQGPAFYMANGILSAVSDNVFVATVYVDEVGQALLKNEIDRDTFDLLAVAINTGTNIPSVATPNGQAAFLFLLTSALAPLVRLSYGRMVIMALPYTIVMSITGLVMTATVLEPATDYLYENGWIQHHQVEDLQETPLIPGH.

The next 10 membrane-spanning stretches (helical) occupy residues 13–33 (FLGQ…LINP), 67–87 (PGGL…ETVL), 90–110 (VVGN…IYFL), 138–158 (AAAL…VIAV), 205–225 (LLMH…VGEP), 245–265 (MAPI…FLEF), 302–333 (LVIQ…VIIL), 350–370 (FEEA…VAVI), 449–469 (VATP…LAPL), and 477–497 (MVIM…VMTA).

Belongs to the NhaB Na(+)/H(+) (TC 2.A.34) antiporter family.

Its subcellular location is the cell inner membrane. The enzyme catalyses 2 Na(+)(in) + 3 H(+)(out) = 2 Na(+)(out) + 3 H(+)(in). Functionally, na(+)/H(+) antiporter that extrudes sodium in exchange for external protons. The chain is Na(+)/H(+) antiporter NhaB from Alcanivorax borkumensis (strain ATCC 700651 / DSM 11573 / NCIMB 13689 / SK2).